The following is a 214-amino-acid chain: uncharacterized protein (214 aa).

An N-terminal signal peptide occupies residues 1–24; the sequence is MVTPHGILLLTITAAASLLWITFA. A disordered region spans residues 99–121; that stretch reads APNDTQEQNSTRNKRDSESYTAT. Residues 100 to 109 are compositionally biased toward polar residues; that stretch reads PNDTQEQNST.

In terms of tissue distribution, component of the acid-insoluble and acid-soluble organic matrix of the aragonitic skeleton (at protein level).

Its subcellular location is the secreted. This is an uncharacterized protein from Acropora millepora (Staghorn coral).